A 305-amino-acid polypeptide reads, in one-letter code: uncharacterized protein (305 aa).

The 229-residue stretch at 5–233 folds into the ABC transporter domain; the sequence is LELKNVTKNI…ENDTYFFQVE (229 aa). 37-44 provides a ligand contact to ATP; the sequence is GPNGAGKT.

This sequence belongs to the ABC transporter superfamily.

This is an uncharacterized protein from Bacillus subtilis (strain 168).